A 309-amino-acid polypeptide reads, in one-letter code: Ribosomal protein L11 methyltransferase (309 aa).

S-adenosyl-L-methionine contacts are provided by Thr160, Gly181, Asp203, and Asn245.

It belongs to the methyltransferase superfamily. PrmA family.

It is found in the cytoplasm. The catalysed reaction is L-lysyl-[protein] + 3 S-adenosyl-L-methionine = N(6),N(6),N(6)-trimethyl-L-lysyl-[protein] + 3 S-adenosyl-L-homocysteine + 3 H(+). Functionally, methylates ribosomal protein L11. The polypeptide is Ribosomal protein L11 methyltransferase (Caldanaerobacter subterraneus subsp. tengcongensis (strain DSM 15242 / JCM 11007 / NBRC 100824 / MB4) (Thermoanaerobacter tengcongensis)).